A 162-amino-acid chain; its full sequence is Eukaryotic translation initiation factor 5 (162 aa).

Residues 59-162 are disordered; it reads PPNLNPAVQG…EKDRMDIFYE (104 aa). Positions 85-109 are enriched in polar residues; the sequence is GDTNGDTSQVDDQNESLEASVNENS. A compositionally biased stretch (basic and acidic residues) spans 148–162; the sequence is DLEKREKDRMDIFYE.

This sequence belongs to the eIF-2-beta/eIF-5 family.

Its function is as follows. Catalyzes the hydrolysis of GTP bound to the 40S ribosomal initiation complex (40S.mRNA.Met-tRNA[F].eIF-2.GTP) with the subsequent joining of a 60S ribosomal subunit resulting in the release of eIF-2 and the guanine nucleotide. The subsequent joining of a 60S ribosomal subunit results in the formation of a functional 80S initiation complex (80S.mRNA.Met-tRNA[F]). This chain is Eukaryotic translation initiation factor 5, found in Tribolium castaneum (Red flour beetle).